A 90-amino-acid chain; its full sequence is Protein S100-A6 (90 aa).

EF-hand domains are found at residues 12–47 and 48–83; these read LVAI…IGSK and LQDA…LALI. Ca(2+)-binding residues include threonine 28 and glutamate 33. Lysine 40 bears the N6-acetyllysine mark. Serine 46 carries the post-translational modification Phosphoserine. An N6-acetyllysine; alternate modification is found at lysine 47. The residue at position 47 (lysine 47) is an N6-succinyllysine; alternate. Residues aspartate 61, asparagine 63, aspartate 65, glutamate 67, and glutamate 72 each coordinate Ca(2+).

Belongs to the S-100 family. Homodimer; head to tail assembly of 2 subunits. Interacts with CACYBP in a calcium-dependent manner. Interacts with ANXA2 and ANXA11 (via N-terminus). Interacts with SUGT1. Interacts with TP53; has higher affinity for TP53 that is phosphorylated on its N-terminal domain, and lower affinity for TP53 that is phosphorylated on its C-terminal domain. Interacts with tropomyosin. Interacts with FKBP4. Interacts with PPP5C (via TPR repeats); the interaction is calcium-dependent and modulates PPP5C activity. Interacts with TPPP; this interaction inhibits TPPP dimerization. Post-translationally, the N-terminus is blocked.

It localises to the nucleus envelope. It is found in the cytoplasm. The protein resides in the cell membrane. Functionally, may function as calcium sensor and modulator, contributing to cellular calcium signaling. May function by interacting with other proteins, such as TPR-containing proteins, and indirectly play a role in many physiological processes such as the reorganization of the actin cytoskeleton and in cell motility. Binds 2 calcium ions. Calcium binding is cooperative. The chain is Protein S100-A6 (S100A6) from Homo sapiens (Human).